Here is a 264-residue protein sequence, read N- to C-terminus: SPARC (264 aa).

The N-terminal stretch at 1–16 (MRYALAACLLLLAASS) is a signal peptide. The 23-residue stretch at 52-74 (PCEDHQCGWGKECVVGKKGEPTC) folds into the Follistatin-like domain. 7 disulfides stabilise this stretch: cysteine 53-cysteine 64, cysteine 58-cysteine 74, cysteine 76-cysteine 110, cysteine 80-cysteine 103, cysteine 92-cysteine 135, cysteine 141-cysteine 228, and cysteine 236-cysteine 252. One can recognise a Kazal-like domain in the interval 68–137 (KKGEPTCECI…HLEYLGECKK (70 aa)). Asparagine 96 carries N-linked (GlcNAc...) asparagine glycosylation. Positions 224-259 (PMESCIKPFLEGCDANNDGNISIKEWGKCLGLKEGE) constitute an EF-hand domain. Residues aspartate 237, asparagine 239, aspartate 241, asparagine 243, and glutamate 248 each contribute to the Ca(2+) site. N-linked (GlcNAc...) asparagine glycosylation is present at asparagine 243.

Belongs to the SPARC family. As to expression, expressed by body wall and sex muscle cells. Probable association with basement membranes.

Its subcellular location is the secreted. It localises to the extracellular space. The protein localises to the extracellular matrix. It is found in the basement membrane. Its function is as follows. Has a high affinity for collagen. Affects nematode body morphology and mobility. Essential for C.elegans development and muscle function. The cysteine-rich region could have protease inhibitory activity or may provide the framework for a protein binding module. Probable role in skeletal morphogenesis. The protein is SPARC (ost-1) of Caenorhabditis elegans.